The following is a 208-amino-acid chain: Probable splicing factor, arginine/serine-rich 5 (208 aa).

Residues 2–74 (PRLYLGKIPY…MRLVVEMARG (73 aa)) enclose the RRM domain. The segment at 71 to 208 (MARGKPRGND…RSPSPGSPKD (138 aa)) is disordered. Residues 84–123 (SRSPRRRSRSPRRRSRTPPRRRSRSRDRKRSRRSRSRSSS) show a composition bias toward basic residues. Residues 128–153 (PVRESRRRSESRSPSPKRDLKREASR) show a composition bias toward basic and acidic residues.

It belongs to the splicing factor SR family. Post-translationally, extensively phosphorylated on serine residues in the RS domain.

Its subcellular location is the nucleus. Its function is as follows. Plays a functionally redundant role in shifting germ cell sexual differentiation in hermaphrodites. This chain is Probable splicing factor, arginine/serine-rich 5 (rsp-5), found in Caenorhabditis elegans.